The chain runs to 2093 residues: Nuclear-pore anchor (2093 aa).

4 coiled-coil regions span residues 57 to 362 (LEQK…TDEL), 439 to 529 (MILQ…RDVQ), 570 to 627 (DING…RAEE), and 688 to 1172 (QEKA…LEAK). The disordered stretch occupies residues 1175 to 1198 (NSAEKNSRSGTISSGSTDSDHLED). Over residues 1182-1191 (RSGTISSGST) the composition is skewed to low complexity. Coiled-coil stretches lie at residues 1208–1252 (LRRT…AERA) and 1293–1585 (EKCQ…LKHA). Disordered regions lie at residues 1453–1489 (YEKE…AVVE), 1525–1555 (KKDE…KKEK), and 1627–2093 (SNSQ…PSPP). A compositionally biased stretch (basic and acidic residues) spans 1470–1483 (QLEEAKEEAGKRTT). Positions 1652-1674 (STMTRVPSSTPLIKSPVATTQQL) are enriched in polar residues. Basic and acidic residues-rich tracts occupy residues 1710–1719 (KPEESPKVDV) and 1729–1740 (DEGKQPAAHEPE). Residues 1764 to 1779 (SEPQQDSLTQGETSSE) show a composition bias toward polar residues. Residues 1789–1808 (KGSESHPDTSEGENLAKEPA) are compositionally biased toward basic and acidic residues. Residues 1818-1849 (TTDGDNEETEAENAEEKTEEYVEAQQDNEADE) adopt a coiled-coil conformation. 2 stretches are compositionally biased toward acidic residues: residues 1821–1830 (GDNEETEAEN) and 1838–1903 (YVEA…EEGT). Over residues 1921-1931 (TLATPTQSPSR) the composition is skewed to polar residues. A compositionally biased stretch (acidic residues) spans 1935 to 1963 (AMEEAETTIETPVEDDKTDEGGDAAEEAA). The span at 1984–2009 (TSAATTSPVSTAPTTSSTLASAITSS) shows a compositional bias: low complexity. Position 2022 is a phosphoserine (Ser-2022).

In terms of assembly, part of the nuclear pore complex (NPC). The NPC has an eight-fold symmetrical structure comprising a central transport channel and two rings, the cytoplasmic and nuclear rings, to which eight filaments are attached. The cytoplasmic filaments have loose ends, while the nuclear filaments are joined in a distal ring, forming a nuclear basket. NPCs are highly dynamic in configuration and composition, and can be devided in 3 subcomplexes, the NUP62 subcomplex, the NUP107-160 subcomplex and the NUP93 subcomplex, containing approximately 30 different nucleoporin proteins. Interacts with MAD1 and (via N-terminus) with ESD4. Ubiquitous. Highest expression in the shoot apical region.

It localises to the nucleus envelope. The protein localises to the nucleus membrane. Its subcellular location is the nucleus. It is found in the nuclear pore complex. In terms of biological role, component of the nuclear pore complex. Acts as a docking site for activities required for desumoylation and mRNA export. Required for the proper expression or localization of a subset of miRNAs. Plays a role in meristematic cell division by interacting with spindle assembly checkpoint proteins. The chain is Nuclear-pore anchor from Arabidopsis thaliana (Mouse-ear cress).